The sequence spans 408 residues: tRNA pseudouridine synthase D (408 aa).

The active-site Nucleophile is Asp76. A TRUD domain is found at Gly149 to Leu362.

Belongs to the pseudouridine synthase TruD family.

It catalyses the reaction uridine(13) in tRNA = pseudouridine(13) in tRNA. Its function is as follows. Responsible for synthesis of pseudouridine from uracil-13 in transfer RNAs. The sequence is that of tRNA pseudouridine synthase D from Leptospira interrogans serogroup Icterohaemorrhagiae serovar Lai (strain 56601).